The chain runs to 1050 residues: ATP-dependent DNA helicase MPH1 (1050 aa).

Residues 95–262 enclose the Helicase ATP-binding domain; sequence IVQRAFYHNL…EIIDNLNISK (168 aa). 108 to 115 is a binding site for ATP; sequence LPTGLGKT. The DEAH box signature appears at 210 to 213; it reads DEAH. The region spanning 431 to 631 is the Helicase C-terminal domain; the sequence is KIEAMMEELD…LIDLKEQNRM (201 aa). Disordered stretches follow at residues 493–524 and 743–821; these read DESNFGKKSKGKRVGKKQQDDSKSSSENAQIN and DSDE…PPKR. A compositionally biased stretch (basic residues) spans 499 to 508; it reads KKSKGKRVGK. Residues 786-799 are compositionally biased toward basic and acidic residues; sequence RTLDQHHSASEERG. Polar residues predominate over residues 800 to 810; sequence INSNFSHESNL.

It belongs to the DEAD box helicase family. DEAH subfamily. FANCM sub-subfamily. In terms of assembly, interacts with the MHF histone-fold complex to form the FANCM-MHF complex.

It localises to the nucleus. The enzyme catalyses ATP + H2O = ADP + phosphate + H(+). ATP-dependent DNA helicase involved in DNA damage repair by homologous recombination and in genome maintenance. Capable of unwinding D-loops. Plays a role in limiting crossover recombinants during mitotic DNA double-strand break (DSB) repair. Component of a FANCM-MHF complex which promotes gene conversion at blocked replication forks, probably by reversal of the stalled fork. This is ATP-dependent DNA helicase MPH1 from Scheffersomyces stipitis (strain ATCC 58785 / CBS 6054 / NBRC 10063 / NRRL Y-11545) (Yeast).